A 359-amino-acid chain; its full sequence is Homoserine O-acetyltransferase (359 aa).

Positions 49 to 332 (VLICHALTGS…QSSYGHDAFL (284 aa)) constitute an AB hydrolase-1 domain. The active-site Nucleophile is the S143. R212 serves as a coordination point for substrate. Residues D299 and H328 contribute to the active site. A substrate-binding site is contributed by D329.

It belongs to the AB hydrolase superfamily. MetX family. As to quaternary structure, homodimer.

It localises to the cytoplasm. The catalysed reaction is L-homoserine + acetyl-CoA = O-acetyl-L-homoserine + CoA. Its pathway is amino-acid biosynthesis; L-methionine biosynthesis via de novo pathway; O-acetyl-L-homoserine from L-homoserine: step 1/1. Transfers an acetyl group from acetyl-CoA to L-homoserine, forming acetyl-L-homoserine. The chain is Homoserine O-acetyltransferase from Trichormus variabilis (strain ATCC 29413 / PCC 7937) (Anabaena variabilis).